We begin with the raw amino-acid sequence, 192 residues long: Ion-translocating oxidoreductase complex subunit A (192 aa).

The next 6 helical transmembrane spans lie at 5 to 25 (VLLL…FLGL), 39 to 59 (IGMG…AYLV), 67 to 87 (LGIE…VVQF), 102 to 122 (LLGI…VALL), 134 to 154 (IIYG…FASM), and 171 to 191 (SIAM…TGLV).

Belongs to the NqrDE/RnfAE family. In terms of assembly, the complex is composed of six subunits: RnfA, RnfB, RnfC, RnfD, RnfE and RnfG.

It localises to the cell inner membrane. Its function is as follows. Part of a membrane-bound complex that couples electron transfer with translocation of ions across the membrane. The polypeptide is Ion-translocating oxidoreductase complex subunit A (Vibrio parahaemolyticus serotype O3:K6 (strain RIMD 2210633)).